A 636-amino-acid polypeptide reads, in one-letter code: 1-deoxy-D-xylulose-5-phosphate synthase (636 aa).

Thiamine diphosphate-binding positions include His-72 and 113 to 115 (GHA). Mg(2+) is bound at residue Asp-144. Thiamine diphosphate-binding positions include 145 to 146 (GA), Asn-174, Tyr-287, and Glu-370. Asn-174 is a binding site for Mg(2+).

This sequence belongs to the transketolase family. DXPS subfamily. Homodimer. Mg(2+) serves as cofactor. Thiamine diphosphate is required as a cofactor.

The enzyme catalyses D-glyceraldehyde 3-phosphate + pyruvate + H(+) = 1-deoxy-D-xylulose 5-phosphate + CO2. It functions in the pathway metabolic intermediate biosynthesis; 1-deoxy-D-xylulose 5-phosphate biosynthesis; 1-deoxy-D-xylulose 5-phosphate from D-glyceraldehyde 3-phosphate and pyruvate: step 1/1. In terms of biological role, catalyzes the acyloin condensation reaction between C atoms 2 and 3 of pyruvate and glyceraldehyde 3-phosphate to yield 1-deoxy-D-xylulose-5-phosphate (DXP). In Microcystis aeruginosa (strain NIES-843 / IAM M-2473), this protein is 1-deoxy-D-xylulose-5-phosphate synthase.